A 151-amino-acid chain; its full sequence is Calcium-binding protein SPEC 2C (151 aa).

4 EF-hand domains span residues 10–45 (EQRK…IEIE), 46–78 (LTQE…KAEQ), 81–116 (GKGA…CTDP), and 118–151 (MTKE…QSSY). Positions 23, 25, 27, 29, 34, 59, 61, 63, 70, 94, 96, 98, 100, 105, 131, 135, 137, and 142 each coordinate Ca(2+).

In terms of tissue distribution, found in cell lineages giving rise to the aboral ectoderm, a squamous epithelium covering the surface of the late stage embryo and larva.

In terms of biological role, calcium-binding protein involved in larval development and metamorphosis. Likely to function as calcium buffers mediating the transport of calcium from the sea water to the blastocoel where calcium is required for skeleton formation. This Strongylocentrotus purpuratus (Purple sea urchin) protein is Calcium-binding protein SPEC 2C (SPEC2C).